The sequence spans 715 residues: 1,4-alpha-glucan branching enzyme GlgB (715 aa).

D399 serves as the catalytic Nucleophile. The Proton donor role is filled by E452.

The protein belongs to the glycosyl hydrolase 13 family. GlgB subfamily. Monomer.

The catalysed reaction is Transfers a segment of a (1-&gt;4)-alpha-D-glucan chain to a primary hydroxy group in a similar glucan chain.. It participates in glycan biosynthesis; glycogen biosynthesis. Functionally, catalyzes the formation of the alpha-1,6-glucosidic linkages in glycogen by scission of a 1,4-alpha-linked oligosaccharide from growing alpha-1,4-glucan chains and the subsequent attachment of the oligosaccharide to the alpha-1,6 position. This Rhodopseudomonas palustris (strain BisA53) protein is 1,4-alpha-glucan branching enzyme GlgB.